The following is a 93-amino-acid chain: MNGIKYAVFTDKSIRLLGKNQYTFNVESGSTRTEIKHWVELFFDVKVIAMNSHRLPVKGRRVRPIMGHTMHYRRMIITLQPGYSIPPLRKKKT.

It belongs to the universal ribosomal protein uL23 family. In terms of assembly, part of the 50S ribosomal subunit.

It is found in the plastid. It localises to the chloroplast. Binds to 23S rRNA. The polypeptide is Large ribosomal subunit protein uL23cz/uL23cy (rpl23-A) (Glycine max (Soybean)).